Consider the following 474-residue polypeptide: tRNA-2-methylthio-N(6)-dimethylallyladenosine synthase (474 aa).

Residues 3-120 enclose the MTTase N-terminal domain; it reads KKLHIKTWGC…LPEMINSVRG (118 aa). [4Fe-4S] cluster-binding residues include Cys12, Cys49, Cys83, Cys157, Cys161, and Cys164. One can recognise a Radical SAM core domain in the interval 143–375; sequence RAEGPTAFVS…QERINQQAMA (233 aa). The TRAM domain occupies 378-441; the sequence is RRMLGTTQRI…PNSLRGKVVR (64 aa).

It belongs to the methylthiotransferase family. MiaB subfamily. Monomer. Requires [4Fe-4S] cluster as cofactor.

The protein localises to the cytoplasm. It catalyses the reaction N(6)-dimethylallyladenosine(37) in tRNA + (sulfur carrier)-SH + AH2 + 2 S-adenosyl-L-methionine = 2-methylsulfanyl-N(6)-dimethylallyladenosine(37) in tRNA + (sulfur carrier)-H + 5'-deoxyadenosine + L-methionine + A + S-adenosyl-L-homocysteine + 2 H(+). Catalyzes the methylthiolation of N6-(dimethylallyl)adenosine (i(6)A), leading to the formation of 2-methylthio-N6-(dimethylallyl)adenosine (ms(2)i(6)A) at position 37 in tRNAs that read codons beginning with uridine. The chain is tRNA-2-methylthio-N(6)-dimethylallyladenosine synthase from Salmonella enteritidis PT4 (strain P125109).